Reading from the N-terminus, the 1471-residue chain is Myosin-4 (1471 aa).

Residues 4 to 57 enclose the Myosin N-terminal SH3-like domain; that stretch reads EVGTKCWYPHKEQGWIGGEVTKNDFFEGTFHLELKLEDGETVSIETNSFENDDD. Residues 71-777 enclose the Myosin motor domain; it reads ESTDDLTTLS…MLAFLEKLRT (707 aa). Residue 165–172 participates in ATP binding; it reads GESGAGKT. The tract at residues 647 to 669 is actin-binding; the sequence is LGELMAIINSTNVHYIRCIKPNS. IQ domains are found at residues 781 to 801, 804 to 824, 829 to 849, 876 to 898, and 899 to 928; these read NEIC…LQYL, MESI…TRVD, TRAA…EYYR, MLMA…DYRT, and LKRS…EVEE. Residues 938–1063 adopt a coiled-coil conformation; that stretch reads GLLEEAIEFK…LAFIENVIAQ (126 aa). One can recognise a Dilute domain in the interval 1164-1419; it reads SKVLLTVESI…LNYLANVIKR (256 aa).

Belongs to the TRAFAC class myosin-kinesin ATPase superfamily. Myosin family. Interacts with SHE2 and SHE3.

It localises to the bud. Its function is as follows. Part of the mRNA localization machinery that restricts accumulation of certain proteins to the bud and in the daughter cell. Recruited to specific mRNAs including the ASH1 mRNA, coding for a repressor of the HO endonuclease, via its interaction with SHE3. The chain is Myosin-4 (MYO4) from Saccharomyces cerevisiae (strain ATCC 204508 / S288c) (Baker's yeast).